The chain runs to 343 residues: MAESSGSWRDSYKGMSSDNIKGLVLALSSSLFIGASFIVKKKGLKKAASTGTRAGVGGYSYLYEPLWWIGMTTMLLGEIANFAAYAFAPAILVTPLGAVSIIISAVLAHIILREKLHIFGILGCALCVVGSTTIVLHAPQEREIDSVIEVWNLATEPAFMFYASLVIGAAVFLIIRFVPQYGQTNVMVYIGICSLVGSLSVMSVKALGIALKLTFSGTNQLFYPQTWIFTLVVLTCVVTQLNYLNKALDTFNTAIVSPIYYVMFTSLTILASVIMFKDWDRQNGTQIVTEICGFVTILSGTFLLHRTKDMVEGSSVILPLRISKHINEEEGIPLRRQESLRSP.

The Extracellular portion of the chain corresponds to 1 to 18 (MAESSGSWRDSYKGMSSD). A helical membrane pass occupies residues 19 to 39 (NIKGLVLALSSSLFIGASFIV). Topologically, residues 40-66 (KKKGLKKAASTGTRAGVGGYSYLYEPL) are cytoplasmic. A helical transmembrane segment spans residues 67-87 (WWIGMTTMLLGEIANFAAYAF). Topologically, residues 88-90 (APA) are extracellular. A helical transmembrane segment spans residues 91 to 111 (ILVTPLGAVSIIISAVLAHII). Over 112–115 (LREK) the chain is Cytoplasmic. A helical membrane pass occupies residues 116 to 136 (LHIFGILGCALCVVGSTTIVL). Over 137 to 157 (HAPQEREIDSVIEVWNLATEP) the chain is Extracellular. The helical transmembrane segment at 158–178 (AFMFYASLVIGAAVFLIIRFV) threads the bilayer. Residues 179 to 189 (PQYGQTNVMVY) lie on the Cytoplasmic side of the membrane. A helical transmembrane segment spans residues 190–210 (IGICSLVGSLSVMSVKALGIA). Residues 211-220 (LKLTFSGTNQ) lie on the Extracellular side of the membrane. A helical transmembrane segment spans residues 221 to 241 (LFYPQTWIFTLVVLTCVVTQL). The Cytoplasmic portion of the chain corresponds to 242–254 (NYLNKALDTFNTA). The helical transmembrane segment at 255–275 (IVSPIYYVMFTSLTILASVIM) threads the bilayer. Over 276–283 (FKDWDRQN) the chain is Extracellular. Residues 284-304 (GTQIVTEICGFVTILSGTFLL) traverse the membrane as a helical segment. The Cytoplasmic segment spans residues 305-343 (HRTKDMVEGSSVILPLRISKHINEEEGIPLRRQESLRSP).

This sequence belongs to the NIPA (TC 2.A.7) family. In terms of assembly, homodimer.

The protein resides in the cell membrane. The protein localises to the early endosome. In terms of biological role, acts as a Mg(2+) transporter. Can also transport other divalent cations such as Fe(2+), Sr(2+), Ba(2+), Mn(2+) and Co(2+) but to a much less extent than Mg(2+). The chain is Probable magnesium transporter NIPA4 from Arabidopsis thaliana (Mouse-ear cress).